The following is a 540-amino-acid chain: Glucose-6-phosphate isomerase (540 aa).

E350 (proton donor) is an active-site residue. Catalysis depends on residues H381 and K503.

It belongs to the GPI family.

The protein localises to the cytoplasm. The catalysed reaction is alpha-D-glucose 6-phosphate = beta-D-fructose 6-phosphate. It functions in the pathway carbohydrate biosynthesis; gluconeogenesis. Its pathway is carbohydrate degradation; glycolysis; D-glyceraldehyde 3-phosphate and glycerone phosphate from D-glucose: step 2/4. Functionally, catalyzes the reversible isomerization of glucose-6-phosphate to fructose-6-phosphate. The protein is Glucose-6-phosphate isomerase of Burkholderia pseudomallei (strain 668).